A 25-amino-acid polypeptide reads, in one-letter code: Small ribosomal subunit protein eS32 (25 aa).

The tract at residues 1 to 25 is disordered; that stretch reads MRAKWRKKRMRRLKRKRRKMRARSK.

It belongs to the eukaryotic ribosomal protein eS32 family. Component of the small ribosomal subunit.

In Spodoptera frugiperda (Fall armyworm), this protein is Small ribosomal subunit protein eS32 (RpL41).